Consider the following 69-residue polypeptide: Large ribosomal subunit protein bL31 (69 aa).

Zn(2+) contacts are provided by Cys-16, Cys-18, Cys-37, and Cys-40.

This sequence belongs to the bacterial ribosomal protein bL31 family. Type A subfamily. Part of the 50S ribosomal subunit. Zn(2+) serves as cofactor.

Binds the 23S rRNA. The sequence is that of Large ribosomal subunit protein bL31 from Buchnera aphidicola subsp. Cinara cedri (strain Cc).